The primary structure comprises 269 residues: Undecaprenyl-diphosphatase (269 aa).

The next 8 helical transmembrane spans lie at 3-23, 41-61, 78-98, 107-127, 148-167, 184-204, 213-233, and 248-268; these read LLIKAFIMGIVEGLTEFLPIS, FATMFEIVIQLGAILAVVFYY, GFNLWFKIFIAFIPAAVIGLL, LFSPFTVAIALIAGAIMMIVI, SLLIGIAQVMSLFPGMSRSA, AEFSFFLAIPTMFAATTLSLL, LEWQALAVGFITSFLTALFVV, and FAYYRLAVGVLMILLVAEKIV.

The protein belongs to the UppP family.

It localises to the cell membrane. The catalysed reaction is di-trans,octa-cis-undecaprenyl diphosphate + H2O = di-trans,octa-cis-undecaprenyl phosphate + phosphate + H(+). In terms of biological role, catalyzes the dephosphorylation of undecaprenyl diphosphate (UPP). Confers resistance to bacitracin. In Thermoanaerobacter sp. (strain X514), this protein is Undecaprenyl-diphosphatase.